A 544-amino-acid chain; its full sequence is Chaperonin GroEL 1 (544 aa).

ATP-binding positions include 29–32 (TLGP), 86–90 (DGTTT), Gly-413, and Asp-495. The disordered stretch occupies residues 525–544 (PEPKTNTPASSGSGMSDYDY). Positions 528–538 (KTNTPASSGSG) are enriched in polar residues.

The protein belongs to the chaperonin (HSP60) family. Forms a cylinder of 14 subunits composed of two heptameric rings stacked back-to-back. Interacts with the co-chaperonin GroES.

Its subcellular location is the cytoplasm. The catalysed reaction is ATP + H2O + a folded polypeptide = ADP + phosphate + an unfolded polypeptide.. Together with its co-chaperonin GroES, plays an essential role in assisting protein folding. The GroEL-GroES system forms a nano-cage that allows encapsulation of the non-native substrate proteins and provides a physical environment optimized to promote and accelerate protein folding. The sequence is that of Chaperonin GroEL 1 from Synechococcus sp. (strain JA-2-3B'a(2-13)) (Cyanobacteria bacterium Yellowstone B-Prime).